The following is a 503-amino-acid chain: Beta-amylase Tri a 17 (503 aa).

Residues Asp51, His91, and Asp99 each contribute to the substrate site. The Proton donor role is filled by Glu184. Residues Lys293, His298, and Thr340 each coordinate substrate. Glu378 (proton acceptor) is an active-site residue. Substrate is bound by residues 379 to 380 and Arg418; that span reads NA.

This sequence belongs to the glycosyl hydrolase 14 family.

It catalyses the reaction Hydrolysis of (1-&gt;4)-alpha-D-glucosidic linkages in polysaccharides so as to remove successive maltose units from the non-reducing ends of the chains.. The protein is Beta-amylase Tri a 17 (BMY1) of Triticum aestivum (Wheat).